The sequence spans 557 residues: MSSYSYDPYYTSYKRRVVESSPRVHIRSSYVSPSRTTYSPVVSSTMRRSYAASSSSSSSLLHGVDTMDLSQVAAISSDLKIVRTQEKAQLQDLNDRFANFIERVHELEQRNKVLEAELLLLRQKHNEPSRLRDLYEQEVRELRLAQEEATGDRQTMRNERERLEDALRLLQGRYEEEALSREDAEARLLDVRKEADMAALARVELEKRMDSLLDEIAFLKKVHEEELAQLQSQVQYAQISLEVEVAKPDLSSALRDIRAQYEKLAAKNMQSAEDWFKSRFTVLTQSAARNTDAVRAAKDEVSESRRMLSAKGLEIEACRGVNDALERQIQELEEKQSGEIAGMQDAINKLEEELRNTKSEMARYLKEYQDLLNVKMALDIEIAAYRKLLEGEETRLSFSGVGAITSGYTQSAPVFGRSAYSLQSSSYMTSRAFPTYYSSHVQEEQLDIEETIESSRAEEAKAEAPEEEEEEAGEEEAEGGEGDEGEGEEGEEAKEEEAEEEGEGEEKEEEEEGEGEAEGEAEGEGEAEGEGEEEEEGKGEEPAEEESKKKKKKKKKK.

S2 is modified (N-acetylserine). The head stretch occupies residues 2-89 (SSYSYDPYYT…KIVRTQEKAQ (88 aa)). In terms of domain architecture, IF rod spans 86 to 396 (EKAQLQDLND…KLLEGEETRL (311 aa)). The coil 1A stretch occupies residues 90 to 121 (LQDLNDRFANFIERVHELEQRNKVLEAELLLL). Positions 122-134 (RQKHNEPSRLRDL) are linker 1. The interval 135-230 (YEQEVRELRL…KVHEEELAQL (96 aa)) is coil 1B. The segment at 231 to 248 (QSQVQYAQISLEVEVAKP) is linker 12. The segment at 249 to 267 (DLSSALRDIRAQYEKLAAK) is coil 2A. Residues 268-276 (NMQSAEDWF) form a linker 2 region. A coil 2B region spans residues 277–392 (KSRFTVLTQS…AAYRKLLEGE (116 aa)). The segment at 393 to 437 (ETRLSFSGVGAITSGYTQSAPVFGRSAYSLQSSSYMTSRAFPTYY) is tail, subdomain A. A tail region spans residues 393–557 (ETRLSFSGVG…KKKKKKKKKK (165 aa)). Residues 438 to 557 (SSHVQEEQLD…KKKKKKKKKK (120 aa)) are tail, subdomain B (acidic). The tract at residues 452–557 (IESSRAEEAK…KKKKKKKKKK (106 aa)) is disordered. Positions 453 to 464 (ESSRAEEAKAEA) are enriched in basic and acidic residues. The segment covering 465-538 (PEEEEEEAGE…GEGEEEEEGK (74 aa)) has biased composition (acidic residues). A compositionally biased stretch (basic and acidic residues) spans 539–548 (GEEPAEEESK).

This sequence belongs to the intermediate filament family. Forms homodimers (in vitro).

It is found in the cell projection. The protein resides in the axon. It localises to the cytoplasm. Its subcellular location is the cytoskeleton. Neurofilaments usually contain three intermediate filament proteins: NEFL, NEFM, and NEFH which are involved in the maintenance of neuronal caliber. May additionally cooperate with other neuronal intermediate filament proteins to form neuronal filamentous networks. The polypeptide is Neurofilament light polypeptide (nefl) (Xenopus tropicalis (Western clawed frog)).